A 368-amino-acid polypeptide reads, in one-letter code: E3 ubiquitin-protein ligase makorin (368 aa).

C3H1-type zinc fingers lie at residues 2-29 (STKRVLCKFFMHGACLKGEYCEFSHDWN) and 30-57 (DQPNNVCTFYQKGSCSYGSRCRYDHVKV). The interval 58-81 (SRNPTVAPPPSSSTTTRASSSLQP) is disordered. The span at 69 to 78 (SSTTTRASSS) shows a compositional bias: low complexity. The C3H1-type 3 zinc-finger motif lies at 147-174 (PADLPICSFAAGGNCPYGEECPQMHGDL). A makorin-type Cys-His region spans residues 175–202 (CTTCGKMCLHPYRPDEREEHTKLCEKNH). Residues 216 to 274 (CSVCLDRVLSKPTAAERKFGLLSECDHPFCISCIRNWRNNSPTSGMDVNSALRACPICR) form an RING-type zinc finger. Residues 303–332 (KLKSIDCKYFDFGTGTCPFGSSCFYKHAYR) form a C3H1-type 4 zinc finger.

In terms of tissue distribution, expressed in primary roots and leaves. Detected in vascular bundle tissues.

It catalyses the reaction S-ubiquitinyl-[E2 ubiquitin-conjugating enzyme]-L-cysteine + [acceptor protein]-L-lysine = [E2 ubiquitin-conjugating enzyme]-L-cysteine + N(6)-ubiquitinyl-[acceptor protein]-L-lysine.. It functions in the pathway protein modification; protein ubiquitination. Functionally, E3 ubiquitin ligase catalyzing the covalent attachment of ubiquitin moieties onto substrate proteins. This is E3 ubiquitin-protein ligase makorin (MKRN) from Oryza sativa subsp. japonica (Rice).